The following is a 98-amino-acid chain: Integration host factor subunit alpha (98 aa).

The interval 49 to 71 (FGNFDLRDKNQRPGRNPKTGEDI) is disordered.

Belongs to the bacterial histone-like protein family. In terms of assembly, heterodimer of an alpha and a beta chain.

In terms of biological role, this protein is one of the two subunits of integration host factor, a specific DNA-binding protein that functions in genetic recombination as well as in transcriptional and translational control. The protein is Integration host factor subunit alpha of Edwardsiella ictaluri (strain 93-146).